The following is a 397-amino-acid chain: Acetate kinase (397 aa).

N7 provides a ligand contact to Mg(2+). Position 14 (K14) interacts with ATP. R88 is a binding site for substrate. Catalysis depends on D145, which acts as the Proton donor/acceptor. ATP is bound by residues 205-209 (HLGNG), 279-281 (DMR), and 326-330 (GIGEN). Residue E380 coordinates Mg(2+).

Belongs to the acetokinase family. Homodimer. Requires Mg(2+) as cofactor. The cofactor is Mn(2+).

It localises to the cytoplasm. It carries out the reaction acetate + ATP = acetyl phosphate + ADP. It functions in the pathway metabolic intermediate biosynthesis; acetyl-CoA biosynthesis; acetyl-CoA from acetate: step 1/2. Functionally, catalyzes the formation of acetyl phosphate from acetate and ATP. Can also catalyze the reverse reaction. This is Acetate kinase from Campylobacter concisus (strain 13826).